Reading from the N-terminus, the 110-residue chain is Large ribosomal subunit protein P1 (110 aa).

Blocked amino end (Ala) is present on A2. Low complexity predominate over residues 69 to 83 (AAPAAGGAAAATEAP). The disordered stretch occupies residues 69-110 (AAPAAGGAAAATEAPAAKEEKKEEKKEESEEEDEDMGFGLFD). The segment covering 84–96 (AAKEEKKEEKKEE) has biased composition (basic and acidic residues). S97 is modified (phosphoserine; in form eL12'-P).

As to quaternary structure, part of the ribosomal stalk of the large ribosomal subunit; P1 and P2 exist as dimers which assemble on the P0 scaffold. Post-translationally, phosphorylation of Ser-97 converts eL12' to eL12'-P.

Functionally, plays an important role in the elongation step of protein synthesis. This is Large ribosomal subunit protein P1 from Artemia salina (Brine shrimp).